The sequence spans 467 residues: Glutamate--tRNA ligase (467 aa).

A 'HIGH' region motif is present at residues 9–19 (PSPTGFLHIGG). The short motif at 250 to 254 (KLSKR) is the 'KMSKS' region element. Lysine 253 is an ATP binding site.

The protein belongs to the class-I aminoacyl-tRNA synthetase family. Glutamate--tRNA ligase type 1 subfamily. As to quaternary structure, monomer.

The protein resides in the cytoplasm. It carries out the reaction tRNA(Glu) + L-glutamate + ATP = L-glutamyl-tRNA(Glu) + AMP + diphosphate. Catalyzes the attachment of glutamate to tRNA(Glu) in a two-step reaction: glutamate is first activated by ATP to form Glu-AMP and then transferred to the acceptor end of tRNA(Glu). This Mesomycoplasma hyopneumoniae (strain J / ATCC 25934 / NCTC 10110) (Mycoplasma hyopneumoniae) protein is Glutamate--tRNA ligase.